A 356-amino-acid polypeptide reads, in one-letter code: Cobalt-precorrin-5B C(1)-methyltransferase (356 aa).

It belongs to the CbiD family.

It carries out the reaction Co-precorrin-5B + S-adenosyl-L-methionine = Co-precorrin-6A + S-adenosyl-L-homocysteine. It participates in cofactor biosynthesis; adenosylcobalamin biosynthesis; cob(II)yrinate a,c-diamide from sirohydrochlorin (anaerobic route): step 6/10. In terms of biological role, catalyzes the methylation of C-1 in cobalt-precorrin-5B to form cobalt-precorrin-6A. This chain is Cobalt-precorrin-5B C(1)-methyltransferase, found in Geobacter sp. (strain M21).